Here is a 277-residue protein sequence, read N- to C-terminus: MEMO1 family protein TM_0087 (277 aa).

It belongs to the MEMO1 family.

The protein is MEMO1 family protein TM_0087 of Thermotoga maritima (strain ATCC 43589 / DSM 3109 / JCM 10099 / NBRC 100826 / MSB8).